Consider the following 609-residue polypeptide: UvrABC system protein C (609 aa).

One can recognise a GIY-YIG domain in the interval 16–94 (SSPGVYRMYD…IKQYMPKYNV (79 aa)). The 36-residue stretch at 203 to 238 (HQVMSVLVGKMEQAASDMRYEQAALYRDQITALRRV) folds into the UVR domain.

This sequence belongs to the UvrC family. In terms of assembly, interacts with UvrB in an incision complex.

Its subcellular location is the cytoplasm. Functionally, the UvrABC repair system catalyzes the recognition and processing of DNA lesions. UvrC both incises the 5' and 3' sides of the lesion. The N-terminal half is responsible for the 3' incision and the C-terminal half is responsible for the 5' incision. In Shewanella halifaxensis (strain HAW-EB4), this protein is UvrABC system protein C.